The chain runs to 85 residues: U5-theraphotoxin-Hhn1a (85 aa).

The signal sequence occupies residues 1 to 21; sequence MKSQIFFAVAALFLLTVRTYA. Residues 22-49 constitute a propeptide that is removed on maturation; it reads SKSKEQDLRDALFSAMFSADNQLNPQER. Cystine bridges form between C51-C65, C58-C70, and C64-C77.

It belongs to the neurotoxin 10 (Hwtx-1) family. 18 (Hntx-VII) subfamily. In terms of tissue distribution, expressed by the venom gland.

It is found in the secreted. Its function is as follows. Ion channel impairing toxin that inhibits voltage-gated sodium channels. The recombinantly expressed toxin shows a weak activity against Nav1.7/SCN9A, and shifts the voltage dependence of channel activation to more depolarized potentials. In Cyriopagopus hainanus (Chinese bird spider), this protein is U5-theraphotoxin-Hhn1a.